The following is a 212-amino-acid chain: Proteasome subunit beta type-2 (212 aa).

This sequence belongs to the peptidase T1B family. As to quaternary structure, the 26S proteasome consists of a 20S proteasome core and two 19S regulatory subunits. The 20S proteasome core is composed of 28 subunits that are arranged in four stacked rings, resulting in a barrel-shaped structure. The two end rings are each formed by seven alpha subunits, and the two central rings are each formed by seven beta subunits. The catalytic chamber with the active sites is on the inside of the barrel.

It localises to the cytoplasm. Its subcellular location is the nucleus. Non-catalytic component of the proteasome, a multicatalytic proteinase complex which is characterized by its ability to cleave peptides with Arg, Phe, Tyr, Leu, and Glu adjacent to the leaving group at neutral or slightly basic pH. The proteasome has an ATP-dependent proteolytic activity. This Oryza sativa subsp. japonica (Rice) protein is Proteasome subunit beta type-2 (PBD1).